A 415-amino-acid polypeptide reads, in one-letter code: von Willebrand factor A domain-containing protein 1 (415 aa).

The N-terminal stretch at 1 to 18 (MLFWTVLSMALSLRLALA) is a signal peptide. One can recognise a VWFA domain in the interval 34–213 (DLLFLLDSSA…ELRGAIIDAM (180 aa)). A phosphoserine mark is found at S74, S80, and S93. Fibronectin type-III domains lie at 214–305 (QPHQ…LQEE) and 307–405 (GPER…VPQA). N-linked (GlcNAc...) asparagine glycosylation occurs at N264. An intrachain disulfide couples C369 to C393.

Homodimer or homomultimer; disulfide-linked. Interacts with HSPG2. In terms of processing, N-glycosylated.

Its subcellular location is the secreted. The protein resides in the extracellular space. It localises to the extracellular matrix. It is found in the basement membrane. In terms of biological role, promotes matrix assembly. Involved in the organization of skeletal muscles and in the formation of neuromuscular junctions. The protein is von Willebrand factor A domain-containing protein 1 (Vwa1) of Rattus norvegicus (Rat).